A 65-amino-acid polypeptide reads, in one-letter code: Large ribosomal subunit protein uL30 (65 aa).

Belongs to the universal ribosomal protein uL30 family. In terms of assembly, part of the 50S ribosomal subunit.

This Mesorhizobium japonicum (strain LMG 29417 / CECT 9101 / MAFF 303099) (Mesorhizobium loti (strain MAFF 303099)) protein is Large ribosomal subunit protein uL30.